The chain runs to 154 residues: Protein phosphatase 1 regulatory subunit 27 (154 aa).

2 ANK repeats span residues 63–92 and 96–125; these read SGLA…DIHQ and AGWT…DRDA.

As to quaternary structure, interacts with DYSF and PPP1CA.

Functionally, inhibits phosphatase activity of protein phosphatase 1 (PP1) complexes. The sequence is that of Protein phosphatase 1 regulatory subunit 27 (PPP1R27) from Homo sapiens (Human).